The sequence spans 164 residues: R-phycoerythrin alpha chain (164 aa).

8 residues coordinate (2R,3E)-phycoerythrobilin: Asn47, Lys81, Cys82, Arg84, His88, Arg137, Cys139, and Arg142.

This sequence belongs to the phycobiliprotein family. As to quaternary structure, heterododecamer of 6 alpha and 6 beta chains. The basic functional unit of phycobiliproteins is a ring-shaped hexamer formed from two back-to-back trimers contacting via the alpha chain subunits. The trimers are composed of alpha/beta subunit heterodimers arranged around a three-fold axis of symmetry. The phycoerythrins also contain a gamma subunit which is located in the center of the hexamer. Contains two covalently linked phycoerythrobilin chromophores.

The protein localises to the plastid. It localises to the chloroplast thylakoid membrane. Its function is as follows. Light-harvesting photosynthetic tetrapyrrole chromophore-protein from the phycobiliprotein complex. This is R-phycoerythrin alpha chain (rpeA) from Agarophyton chilense (Red seaweed).